Reading from the N-terminus, the 191-residue chain is Signal peptidase complex catalytic subunit sec11 (191 aa).

Residues 1–18 lie on the Cytoplasmic side of the membrane; sequence MLSALGGNLSNARQSIAQ. The helical; Signal-anchor for type II membrane protein transmembrane segment at 19–39 threads the bilayer; it reads VLNFALVLSTAFMLWKGVSIA. Topologically, residues 40-191 are lumenal; it reads SNSSSPIVVV…MGLMVILQRE (152 aa). N-linked (GlcNAc...) asparagine glycosylation occurs at Asn41. Residues Ser53, His92, and Asp133 each act as charge relay system in the active site. A C-terminal short (CTS) helix region spans residues 177-188; that stretch reads VLLGVMGLMVIL.

This sequence belongs to the peptidase S26B family. In terms of assembly, component of the signal peptidase complex (SPC) composed of a catalytic subunit SEC11 and three accessory subunits SPC1, SPC2 and SPC3. The complex induces a local thinning of the ER membrane which is used to measure the length of the signal peptide (SP) h-region of protein substrates. This ensures the selectivity of the complex towards h-regions shorter than 18-20 amino acids. SPC associates with the translocon complex.

The protein resides in the endoplasmic reticulum membrane. It catalyses the reaction Cleavage of hydrophobic, N-terminal signal or leader sequences from secreted and periplasmic proteins.. In terms of biological role, catalytic component of the signal peptidase complex (SPC) which catalyzes the cleavage of N-terminal signal sequences from nascent proteins as they are translocated into the lumen of the endoplasmic reticulum. Specifically cleaves N-terminal signal peptides that contain a hydrophobic alpha-helix (h-region) shorter than 18-20 amino acids. The chain is Signal peptidase complex catalytic subunit sec11 (sec11) from Talaromyces marneffei (strain ATCC 18224 / CBS 334.59 / QM 7333) (Penicillium marneffei).